Reading from the N-terminus, the 1301-residue chain is Dentin sialophosphoprotein (1301 aa).

Residues Met1–Ala15 form the signal peptide. N-linked (GlcNAc...) asparagine glycosylation is found at Asn41 and Asn49. The tract at residues Lys55–Gly89 is disordered. Residues His62 to Glu79 are compositionally biased toward basic and acidic residues. 7 N-linked (GlcNAc...) asparagine glycosylation sites follow: Asn81, Asn130, Asn150, Asn190, Asn191, Asn209, and Asn222. Residues Ala146–Gly165 show a composition bias toward polar residues. A disordered region spans residues Ala146–Gly171. Positions Asn202–Asp1301 are disordered. A compositionally biased stretch (polar residues) spans Ser203 to Arg221. The segment covering Ala251–Ala267 has biased composition (acidic residues). A Phosphoserine; by CK1 modification is found at Ser259. Polar residues predominate over residues Lys271–Gln280. N-linked (GlcNAc...) asparagine glycosylation is present at Asn275. Composition is skewed to basic and acidic residues over residues Glu281–Ser293 and Asp300–Glu327. Ser301 is modified (phosphoserine). The N-linked (GlcNAc...) asparagine glycan is linked to Asn336. Residues Arg340–Glu377 show a composition bias toward basic and acidic residues. An N-linked (GlcNAc...) asparagine glycan is attached at Asn387. The span at Ile388 to Gln404 shows a compositional bias: basic and acidic residues. 2 stretches are compositionally biased toward low complexity: residues Ser439 to Ser452 and Gly462 to Ser487. Residues Arg488–Asp490 carry the Cell attachment site motif. Residues Arg488–Asp506 show a composition bias toward polar residues. Residues Thr518–Asn534 are compositionally biased toward low complexity. The span at Asp536 to Ser549 shows a compositional bias: basic and acidic residues. Low complexity predominate over residues Ser555–Ser564. The span at Asp581–Ser595 shows a compositional bias: acidic residues. Positions Ser596–Ser619 are enriched in low complexity. Residues Ser620–Ser642 show a composition bias toward basic and acidic residues. Low complexity-rich tracts occupy residues Ser643–Ser705, Ser715–Asp1264, Gln1272–Asp1284, and Ser1292–Asp1301.

In terms of assembly, interacts with FBLN7. DSP is glycosylated. As to expression, expressed in teeth. DPP is synthesized by odontoblast and transiently expressed by pre-ameloblasts.

It is found in the secreted. It localises to the extracellular space. The protein resides in the extracellular matrix. Functionally, DSP may be an important factor in dentinogenesis. DPP may bind high amount of calcium and facilitate initial mineralization of dentin matrix collagen as well as regulate the size and shape of the crystals. This Homo sapiens (Human) protein is Dentin sialophosphoprotein (DSPP).